Reading from the N-terminus, the 156-residue chain is Crossover junction endodeoxyribonuclease RuvC (156 aa).

Catalysis depends on residues Asp-7, Glu-66, and Asp-138. Positions 7, 66, and 138 each coordinate Mg(2+).

Belongs to the RuvC family. In terms of assembly, homodimer which binds Holliday junction (HJ) DNA. The HJ becomes 2-fold symmetrical on binding to RuvC with unstacked arms; it has a different conformation from HJ DNA in complex with RuvA. In the full resolvosome a probable DNA-RuvA(4)-RuvB(12)-RuvC(2) complex forms which resolves the HJ. Requires Mg(2+) as cofactor.

The protein resides in the cytoplasm. The catalysed reaction is Endonucleolytic cleavage at a junction such as a reciprocal single-stranded crossover between two homologous DNA duplexes (Holliday junction).. Its function is as follows. The RuvA-RuvB-RuvC complex processes Holliday junction (HJ) DNA during genetic recombination and DNA repair. Endonuclease that resolves HJ intermediates. Cleaves cruciform DNA by making single-stranded nicks across the HJ at symmetrical positions within the homologous arms, yielding a 5'-phosphate and a 3'-hydroxyl group; requires a central core of homology in the junction. The consensus cleavage sequence is 5'-(A/T)TT(C/G)-3'. Cleavage occurs on the 3'-side of the TT dinucleotide at the point of strand exchange. HJ branch migration catalyzed by RuvA-RuvB allows RuvC to scan DNA until it finds its consensus sequence, where it cleaves and resolves the cruciform DNA. The polypeptide is Crossover junction endodeoxyribonuclease RuvC (Ehrlichia canis (strain Jake)).